A 309-amino-acid chain; its full sequence is ADP-L-glycero-D-manno-heptose-6-epimerase (309 aa).

NADP(+) is bound by residues Phe-10–Ile-11, Asp-31–Asn-32, Lys-38, Lys-53, Leu-75–Ser-79, and Asn-92. Tyr-140 functions as the Proton acceptor in the catalytic mechanism. Lys-144 lines the NADP(+) pocket. Asn-169 is a substrate binding site. 2 residues coordinate NADP(+): Val-170 and Lys-178. Lys-178 functions as the Proton acceptor in the catalytic mechanism. Substrate contacts are provided by residues Ser-180, His-187, Phe-201 to Ser-204, Arg-209, and Tyr-272.

It belongs to the NAD(P)-dependent epimerase/dehydratase family. HldD subfamily. Homopentamer. It depends on NADP(+) as a cofactor.

The catalysed reaction is ADP-D-glycero-beta-D-manno-heptose = ADP-L-glycero-beta-D-manno-heptose. It participates in nucleotide-sugar biosynthesis; ADP-L-glycero-beta-D-manno-heptose biosynthesis; ADP-L-glycero-beta-D-manno-heptose from D-glycero-beta-D-manno-heptose 7-phosphate: step 4/4. Catalyzes the interconversion between ADP-D-glycero-beta-D-manno-heptose and ADP-L-glycero-beta-D-manno-heptose via an epimerization at carbon 6 of the heptose. In Hamiltonella defensa subsp. Acyrthosiphon pisum (strain 5AT), this protein is ADP-L-glycero-D-manno-heptose-6-epimerase.